The sequence spans 361 residues: 3-dehydroquinate synthase (361 aa).

Belongs to the archaeal-type DHQ synthase family.

The enzyme catalyses 2-amino-2,3,7-trideoxy-D-lyxo-hept-6-ulosonate + NAD(+) + H2O = 3-dehydroquinate + NH4(+) + NADH + H(+). Catalyzes the oxidative deamination and cyclization of 2-amino-3,7-dideoxy-D-threo-hept-6-ulosonic acid (ADH) to yield 3-dehydroquinate (DHQ), which is fed into the canonical shikimic pathway of aromatic amino acid biosynthesis. The chain is 3-dehydroquinate synthase from Methanococcus maripaludis (strain C6 / ATCC BAA-1332).